The primary structure comprises 244 residues: Putative membrane peptidase YdiL (244 aa).

The next 6 helical transmembrane spans lie at 7 to 27 (FIIL…PLLF), 44 to 64 (AQGL…LLIL), 80 to 100 (IGLS…SQGI), 127 to 147 (AVPL…EIIF), 159 to 179 (TNFF…HADL), and 202 to 222 (IWVP…MQLE). Catalysis depends on proton donor/acceptor residues glutamate 143 and histidine 176.

The protein belongs to the peptidase U48 family.

It is found in the cell membrane. Functionally, may function as endopeptidase which proteolytically removes the C-terminal three residues of farnesylated peptides containing the CAAX motif where C is cysteine, A is an aliphatic amino acid and X is any amino acid. The polypeptide is Putative membrane peptidase YdiL (ydiL) (Bacillus subtilis (strain 168)).